Reading from the N-terminus, the 256-residue chain is Geranylgeranylglyceryl phosphate synthase (256 aa).

Mg(2+) is bound by residues Asp28 and Ser53. Residues 172–178 (YLEAGSG), 203–204 (GG), and 225–226 (GT) contribute to the sn-glycerol 1-phosphate site.

It belongs to the GGGP/HepGP synthase family. Group II subfamily. The cofactor is Mg(2+).

It localises to the cytoplasm. The enzyme catalyses sn-glycerol 1-phosphate + (2E,6E,10E)-geranylgeranyl diphosphate = sn-3-O-(geranylgeranyl)glycerol 1-phosphate + diphosphate. Its pathway is membrane lipid metabolism; glycerophospholipid metabolism. Functionally, prenyltransferase that catalyzes the transfer of the geranylgeranyl moiety of geranylgeranyl diphosphate (GGPP) to the C3 hydroxyl of sn-glycerol-1-phosphate (G1P). This reaction is the first ether-bond-formation step in the biosynthesis of archaeal membrane lipids. The protein is Geranylgeranylglyceryl phosphate synthase of Methanococcus maripaludis (strain C7 / ATCC BAA-1331).